Reading from the N-terminus, the 346-residue chain is Envelope glycoprotein M (346 aa).

The Intravirion portion of the chain corresponds to 1–12 (MALSRVDVINMR). Residues 13 to 33 (IWVLSIICACLTYVNVTVHLV) form a helical membrane-spanning segment. Residues 34–76 (AVHFPNLGFPCAYYEINDMKAINLSIRNDIRSLTPQLYLNPIQ) are Virion surface-facing. Residues 77-97 (LICYVVFMDICFFFILVYYIV) form a helical membrane-spanning segment. Residues 98–117 (CCVKVFSSEKTPNINQSTRD) are Intravirion-facing. A helical transmembrane segment spans residues 118–140 (ITWMGDSLSCFQFVLTMDTYQFF). The Virion surface portion of the chain corresponds to 141-147 (VTCLSFR). The chain crosses the membrane as a helical span at residues 148 to 168 (LVTLAAFTYCLFFICFTAFTL). The Intravirion portion of the chain corresponds to 169–199 (TMITQYQSSERSFFVLKRIHPKLKGTIKYKT). The helical transmembrane segment at 200 to 220 (IIINMIELMLGFSSMVFAITI) threads the bilayer. The Virion surface portion of the chain corresponds to 221 to 236 (CLGLGNNFYIKSSTVA). A helical transmembrane segment spans residues 237-257 (FASINTFFVMSFVYSLVIELI). The Intravirion segment spans residues 258–263 (LHQYVK). Residues 264–284 (VQFGLHFGILFGILGLTYPIL) form a helical membrane-spanning segment. The Virion surface segment spans residues 285 to 293 (KYDSLFKTE). A helical transmembrane segment spans residues 294 to 314 (WTVKFIVNLAVITIVCLSFII). Over 315-346 (CRLIRFFMRKHHNYKKLPTTVEDLDVLEEANE) the chain is Intravirion.

Belongs to the herpesviridae glycoprotein M family. As to quaternary structure, interacts (via N-terminus) with gN (via N-terminus). The gM-gN heterodimer forms the gCII complex.

It localises to the virion membrane. It is found in the host Golgi apparatus. Its subcellular location is the host trans-Golgi network. The protein localises to the host endosome membrane. The protein resides in the host nucleus inner membrane. Functionally, envelope glycoprotein important for virion assembly and egress. Plays a role in the correct incorporation of gH-gL into virion membrane. Directs the glycoprotein N (gN) to the host trans-Golgi network. The sequence is that of Envelope glycoprotein M from Homo sapiens (Human).